Consider the following 449-residue polypeptide: Ras-related GTP-binding protein D (449 aa).

Residues 1 to 55 (MSQVLGKPQPQGEDGGEDQEEDELVGLAGYEDGPESSDAELDSGPEEGESRRNSW) are disordered. 2 stretches are compositionally biased toward acidic residues: residues 14–24 (DGGEDQEEDEL) and 32–47 (DGPESSDAELDSGPEE). Positions 120, 121, 122, 123, 124, 125, 126, and 140 each coordinate GTP. The GDP site is built by Arg-121, Ser-122, Gly-123, Lys-124, Ser-125, Ser-126, Thr-140, Glu-144, and Thr-146. The GTP site is built by Thr-146, Gly-169, His-228, Lys-229, and Asp-231. The GDP site is built by His-228, Lys-229, Asp-231, Ser-269, and Ile-270. A GTP-binding site is contributed by Ile-270. The segment at 428–449 (KAQSRLPKKTGATPNGTPRVLL) is disordered.

The protein belongs to the GTR/RAG GTP-binding protein family. Forms a heterodimer with RRAGA in a sequence-independent manner and RRAGB. Heterodimerization stabilizes RRAG proteins. The GDP-bound form of RRAGD (in complex with the GTP-bound form of RRAGA or RRAGB), interacts with RPTOR, thereby promoting recruitment of mTORC1 to the lysosomes. Component of the lysosomal folliculin complex (LFC), composed of FLCN, FNIP1 (or FNIP2), RagA/RRAGA or RagB/RRAGB GDP-bound, RagC/RRAGC or RagD/RRAGD GTP-bound, and Ragulator. Interacts with NOL8. Interacts with SH3BP4; the interaction with this negative regulator is most probably direct, preferentially occurs with the inactive GDP-bound form of RRAGD and is negatively regulated by amino acids. The Rag heterodimer interacts with SLC38A9; the probable amino acid sensor. Interacts with SESN1, SESN2 and SESN3. The GDP-bound form interacts with TFEB. The GDP-bound form interacts with TFE3. As to expression, expressed in the distal tubule of the kidney.

It localises to the cytoplasm. It is found in the nucleus. Its subcellular location is the lysosome membrane. It catalyses the reaction GTP + H2O = GDP + phosphate + H(+). The activation of RagD/RRAGD is mediated by a GTPase activating protein (GAP). In high-amino acid conditions, activated by GTPase activating protein FLCN that stimulates RRAGD GTPase activity to turn it into its active GDP-bound form. In response to amino acid depletion, the GATOR1 complex inactivates RagC/RRAGC by securing the GTP-bound inactive form. Its function is as follows. Guanine nucleotide-binding protein that plays a crucial role in the cellular response to amino acid availability through regulation of the mTORC1 signaling cascade. Forms heterodimeric Rag complexes with RagA/RRAGA or RagB/RRAGB and cycles between an inactive GTP-bound and an active GDP-bound form: RagD/RRAGD is in its active form when GDP-bound RagD/RRAGD forms a complex with GTP-bound RagA/RRAGA (or RagB/RRAGB) and in an inactive form when GTP-bound RagD/RRAGD heterodimerizes with GDP-bound RagA/RRAGA (or RagB/RRAGB). In its active form, promotes the recruitment of mTORC1 to the lysosomes and its subsequent activation by the GTPase RHEB. This is a crucial step in the activation of the MTOR signaling cascade by amino acids. Also plays a central role in the non-canonical mTORC1 complex, which acts independently of RHEB and specifically mediates phosphorylation of MiT/TFE factors TFEB and TFE3: GDP-bound RagD/RRAGD mediates recruitment of MiT/TFE factors TFEB and TFE3. This Mus musculus (Mouse) protein is Ras-related GTP-binding protein D.